Consider the following 260-residue polypeptide: HTH-type transcriptional repressor NanR (260 aa).

Positions 1-20 are disordered; sequence MNPFDSQSEDASDAIGRSLG. The 69-residue stretch at 27–95 folds into the HTH gntR-type domain; the sequence is KKLSEMVEEE…NGERARVSRP (69 aa). Positions 55–74 form a DNA-binding region, H-T-H motif; that stretch reads ERELMAFFNVGRPSVREALA.

Belongs to the NanR family.

In terms of biological role, transcriptional repressor that controls expression of the genes required for the catabolism of sialic acids. The chain is HTH-type transcriptional repressor NanR from Cronobacter sakazakii (strain ATCC BAA-894) (Enterobacter sakazakii).